The chain runs to 339 residues: Ketol-acid reductoisomerase (NADP(+)) (339 aa).

The region spanning 1-182 (MRVYYDRDAD…GGGRSGVIET (182 aa)) is the KARI N-terminal Rossmann domain. NADP(+)-binding positions include 24-27 (YGSQ), Arg-48, Ser-51, Thr-53, and 83-86 (DELQ). Residue His-108 is part of the active site. Gly-134 serves as a coordination point for NADP(+). Positions 183–328 (TFKEECETDL…GKLRAMMPWI (146 aa)) constitute a KARI C-terminal knotted domain. Asp-191, Glu-195, Glu-227, and Glu-231 together coordinate Mg(2+). Ser-252 serves as a coordination point for substrate.

Belongs to the ketol-acid reductoisomerase family. Requires Mg(2+) as cofactor.

It catalyses the reaction (2R)-2,3-dihydroxy-3-methylbutanoate + NADP(+) = (2S)-2-acetolactate + NADPH + H(+). The enzyme catalyses (2R,3R)-2,3-dihydroxy-3-methylpentanoate + NADP(+) = (S)-2-ethyl-2-hydroxy-3-oxobutanoate + NADPH + H(+). Its pathway is amino-acid biosynthesis; L-isoleucine biosynthesis; L-isoleucine from 2-oxobutanoate: step 2/4. It participates in amino-acid biosynthesis; L-valine biosynthesis; L-valine from pyruvate: step 2/4. Its function is as follows. Involved in the biosynthesis of branched-chain amino acids (BCAA). Catalyzes an alkyl-migration followed by a ketol-acid reduction of (S)-2-acetolactate (S2AL) to yield (R)-2,3-dihydroxy-isovalerate. In the isomerase reaction, S2AL is rearranged via a Mg-dependent methyl migration to produce 3-hydroxy-3-methyl-2-ketobutyrate (HMKB). In the reductase reaction, this 2-ketoacid undergoes a metal-dependent reduction by NADPH to yield (R)-2,3-dihydroxy-isovalerate. The protein is Ketol-acid reductoisomerase (NADP(+)) of Brucella abortus (strain S19).